Here is a 506-residue protein sequence, read N- to C-terminus: MTDQSPAPTAQDENRLIAERRAKLARLRETGVAFPNDFVPDAHAADLHARYDGLDQEALTAAAVTVKVAGRMMLKRVMGKASFATLQDGSGRIQIYLERGTLGEEAYAAFKQWDIGDIIAIEGPVFKTNKGELSVHANSARLLSKSLRPLPDKFHGVADQELRYRQRYVDLIMTDATRRTFEARSKAVGGIRQTMLNAGFLEVETPMLHPIPGGAAAKPFVTHHNALDMQMFLRIAPELYLKRLIVGGFERVFEINRNFRNEGVSPRHNPEFTMMEFYAAYADYRWLMDFTEDLIRQAAIAATGSAVLSYQDRELDLSQPFDRLTICEAILKYAEGYTQAQLDDPAFVRAELRKLGANVEGPPLARAGLGALQLALFEETAEAKLWRPTYIIDYPVEVSPLARASDTRDGITERFELFITGREIANGFSELNDPEDQAERFRAQVEAKDAGDEEAMYFDADYIRALEYGMPPTGGCGIGIDRLVMLLTDSPSIRDVILFPHLRRED.

2 residues coordinate Mg(2+): glutamate 416 and glutamate 423.

It belongs to the class-II aminoacyl-tRNA synthetase family. Homodimer. Mg(2+) serves as cofactor.

The protein localises to the cytoplasm. It carries out the reaction tRNA(Lys) + L-lysine + ATP = L-lysyl-tRNA(Lys) + AMP + diphosphate. In Bordetella bronchiseptica (strain ATCC BAA-588 / NCTC 13252 / RB50) (Alcaligenes bronchisepticus), this protein is Lysine--tRNA ligase.